We begin with the raw amino-acid sequence, 944 residues long: Probable UDP-N-acetylglucosamine--peptide N-acetylglucosaminyltransferase SPINDLY (944 aa).

TPR repeat units follow at residues 34–67 (GTDALRYANILRSRNKFADALQLYTTVLDKDGAN), 68–101 (VEALIGKGICLQAQSLPRQALDCFTEAVKVDPKN), 102–135 (ACALTHCGMIYKDEGHLVEAAEAYQKARSADPSY), 143–176 (AIVLTDLGTSLKLAGNTEDGIQKYCEALEVDSHY), 177–210 (APAYYNLGVVYSEMMQFDVALTCYEKAALERPLY), 211–244 (AEAYCNMGVIYKNRGELDAAIACYDRCLTISPNF), 252–285 (AIALTDLGTKVKIEGDINQGVAYYKKALFYNWHY), 286–319 (ADAMYNLGVAYGEMLNFEMAIVFYELALHFNPRC), 320–353 (AEACNNLGVIYKDRDNLDKAVECYQMALSIKPNF), 355–387 (QSLNNLGVVYTVQGKMDAAASMIEKAILANPTY), and 388–421 (AEAYNNLGVLYRDAGSITLSVQAYERCLQIDPDS). Residues 422–944 (RNAGQNRLLA…RCEANGHSSR (523 aa)) form a catalytic region region. Residues 873 to 944 (NATAEEDNQS…RCEANGHSSR (72 aa)) form a disordered region. A compositionally biased stretch (polar residues) spans 897–911 (PQPQIMVNGVTSPEG).

This sequence belongs to the glycosyltransferase 41 family. O-GlcNAc transferase subfamily. Expressed in all parts of plants, including immature leaf blade, leaf sheath, mature leaf blade, roots, germinating embryos and aleurone layers.

The protein resides in the nucleus. It carries out the reaction L-seryl-[protein] + UDP-N-acetyl-alpha-D-glucosamine = 3-O-(N-acetyl-beta-D-glucosaminyl)-L-seryl-[protein] + UDP + H(+). It catalyses the reaction L-threonyl-[protein] + UDP-N-acetyl-alpha-D-glucosamine = 3-O-(N-acetyl-beta-D-glucosaminyl)-L-threonyl-[protein] + UDP + H(+). The protein operates within protein modification; protein glycosylation. Functionally, probable O-linked N-acetylglucosamine transferase (OGT) involved in various processes such as gibberellin (GA) signaling pathway. OGTs catalyze the addition of nucleotide-activated sugars directly onto the polypeptide through O-glycosidic linkage with the hydroxyl of serine or threonine. Probably acts by adding O-linked sugars to yet unknown proteins. This chain is Probable UDP-N-acetylglucosamine--peptide N-acetylglucosaminyltransferase SPINDLY (SPY), found in Hordeum vulgare (Barley).